The chain runs to 354 residues: MEKYLIKMPIKSKASEVPKDKAVVKQGTPKIRSKVTKNDTPKELKNKENAGEDNTPKQTNGRLGRPAGKRKNLDTPETKAEKIATEEENPPKRRSSRLTRSTRSMAEDGSPSPEKEKPEKLPFIKYKGAIKYYTESQDIAASADDVLQWVEKQKDEVVPMAFDMEWPFSFQTGPGKSAVIQICVDEKCCYIYQLTNLKKLPAVLVALINHSKVRLHGVNIKNDFRKLARDFPEVSAEPLIEKCVDLGVWCNEVCETGGRWSLERLTNFIAKKAMDKSKKVRMSKWHVIPLDENQLMYAAIDVYIGQVIYRELERREKAKIINEEEFKEKNGEAAFKAMKTLGETFLSKINEVTL.

Residues Met-1–Lys-120 form a disordered region. 3 stretches are compositionally biased toward basic and acidic residues: residues Lys-13–Val-23, Thr-36–Ala-50, and Lys-71–Pro-91. Phosphoserine occurs at positions 104, 110, and 112. One can recognise a 3'-5' exonuclease domain in the interval Val-146–Arg-314. Asp-163, Glu-165, and Asp-301 together coordinate Mg(2+).

Belongs to the WRNexo family.

Its subcellular location is the nucleus. Its function is as follows. Has exonuclease activity on both single-stranded and duplex templates bearing overhangs, but not blunt ended duplex DNA, and cleaves in a 3'-5' direction. Essential for the formation of DNA replication focal centers. Has an important role in maintaining genome stability. The sequence is that of 3'-5' exonuclease from Drosophila erecta (Fruit fly).